The following is a 321-amino-acid chain: Nitrilase blr3397 (321 aa).

The CN hydrolase domain occupies 10 to 277; sequence YKAAVVQAAS…ETILYADIAL (268 aa). Glu50 functions as the Proton acceptor in the catalytic mechanism. Lys137 (proton donor) is an active-site residue. Residue Cys171 is the Nucleophile of the active site.

Belongs to the carbon-nitrogen hydrolase superfamily. Nitrilase family. Homodecamer.

It catalyses the reaction an aliphatic nitrile + 2 H2O = a carboxylate + NH4(+). In terms of biological role, nitrilase that acts on various kinds of nitrile compounds such as aliphatic and aromatic nitriles. Has higher activity toward aliphatic nitriles compared to aromatic nitriles. Among the different substrates tested, has the highest activity toward hydrocinnamonitrile. This chain is Nitrilase blr3397, found in Bradyrhizobium diazoefficiens (strain JCM 10833 / BCRC 13528 / IAM 13628 / NBRC 14792 / USDA 110).